A 130-amino-acid chain; its full sequence is Sec-independent protein translocase protein TatB (130 aa).

The helical transmembrane segment at 1 to 21 (MFDIGFWELVLIFVVGLVVLG) threads the bilayer. A disordered region spans residues 85–130 (LKQAAQSVNRPYADVSAKNEATSSSSSDATHQTEATKTSAANTKSE). Over residues 112-130 (DATHQTEATKTSAANTKSE) the composition is skewed to polar residues.

This sequence belongs to the TatB family. In terms of assembly, the Tat system comprises two distinct complexes: a TatABC complex, containing multiple copies of TatA, TatB and TatC subunits, and a separate TatA complex, containing only TatA subunits. Substrates initially bind to the TatABC complex, which probably triggers association of the separate TatA complex to form the active translocon.

It localises to the cell inner membrane. Its function is as follows. Part of the twin-arginine translocation (Tat) system that transports large folded proteins containing a characteristic twin-arginine motif in their signal peptide across membranes. Together with TatC, TatB is part of a receptor directly interacting with Tat signal peptides. TatB may form an oligomeric binding site that transiently accommodates folded Tat precursor proteins before their translocation. The polypeptide is Sec-independent protein translocase protein TatB (Vibrio vulnificus (strain CMCP6)).